A 324-amino-acid polypeptide reads, in one-letter code: tRNA N6-adenosine threonylcarbamoyltransferase (324 aa).

H107, H111, and Y127 together coordinate Fe cation. Substrate-binding positions include 127–131, D159, G172, E176, and N257; that span reads YVSGG. D285 is a binding site for Fe cation.

It belongs to the KAE1 / TsaD family. Monomer. Component of the KEOPS complex that consists of Kae1, Bud32, Cgi121 and Pcc1; the whole complex dimerizes. It depends on Fe(2+) as a cofactor.

The protein localises to the cytoplasm. The enzyme catalyses L-threonylcarbamoyladenylate + adenosine(37) in tRNA = N(6)-L-threonylcarbamoyladenosine(37) in tRNA + AMP + H(+). Its function is as follows. Required for the formation of a threonylcarbamoyl group on adenosine at position 37 (t(6)A37) in tRNAs that read codons beginning with adenine. Is a component of the KEOPS complex that is probably involved in the transfer of the threonylcarbamoyl moiety of threonylcarbamoyl-AMP (TC-AMP) to the N6 group of A37. Kae1 likely plays a direct catalytic role in this reaction, but requires other protein(s) of the complex to fulfill this activity. In vitro, binds tRNA, ssRNA, both single- and double-stranded DNA, and exhibits a low ATPase activity. The sequence is that of tRNA N6-adenosine threonylcarbamoyltransferase from Pyrococcus abyssi (strain GE5 / Orsay).